Reading from the N-terminus, the 287-residue chain is Ribosomal RNA small subunit methyltransferase A (287 aa).

The S-adenosyl-L-methionine site is built by asparagine 28, leucine 30, glycine 55, glutamate 76, aspartate 101, and asparagine 125.

The protein belongs to the class I-like SAM-binding methyltransferase superfamily. rRNA adenine N(6)-methyltransferase family. RsmA subfamily.

Its subcellular location is the cytoplasm. The catalysed reaction is adenosine(1518)/adenosine(1519) in 16S rRNA + 4 S-adenosyl-L-methionine = N(6)-dimethyladenosine(1518)/N(6)-dimethyladenosine(1519) in 16S rRNA + 4 S-adenosyl-L-homocysteine + 4 H(+). In terms of biological role, specifically dimethylates two adjacent adenosines (A1518 and A1519) in the loop of a conserved hairpin near the 3'-end of 16S rRNA in the 30S particle. May play a critical role in biogenesis of 30S subunits. The sequence is that of Ribosomal RNA small subunit methyltransferase A from Alkaliphilus metalliredigens (strain QYMF).